A 159-amino-acid polypeptide reads, in one-letter code: 6,7-dimethyl-8-ribityllumazine synthase (159 aa).

5-amino-6-(D-ribitylamino)uracil is bound by residues Phe-22, 57–59 (AVE), and 81–83 (AVI). (2S)-2-hydroxy-3-oxobutyl phosphate is bound at residue 86 to 87 (GT). His-89 acts as the Proton donor in catalysis. Residue Phe-114 participates in 5-amino-6-(D-ribitylamino)uracil binding. Arg-128 lines the (2S)-2-hydroxy-3-oxobutyl phosphate pocket.

Belongs to the DMRL synthase family. In terms of assembly, forms an icosahedral capsid composed of 60 subunits, arranged as a dodecamer of pentamers.

It catalyses the reaction (2S)-2-hydroxy-3-oxobutyl phosphate + 5-amino-6-(D-ribitylamino)uracil = 6,7-dimethyl-8-(1-D-ribityl)lumazine + phosphate + 2 H2O + H(+). It participates in cofactor biosynthesis; riboflavin biosynthesis; riboflavin from 2-hydroxy-3-oxobutyl phosphate and 5-amino-6-(D-ribitylamino)uracil: step 1/2. Catalyzes the formation of 6,7-dimethyl-8-ribityllumazine by condensation of 5-amino-6-(D-ribitylamino)uracil with 3,4-dihydroxy-2-butanone 4-phosphate. This is the penultimate step in the biosynthesis of riboflavin. In Shewanella baltica (strain OS155 / ATCC BAA-1091), this protein is 6,7-dimethyl-8-ribityllumazine synthase.